The sequence spans 178 residues: Large ribosomal subunit protein uL6 (178 aa).

Belongs to the universal ribosomal protein uL6 family. In terms of assembly, part of the 50S ribosomal subunit.

In terms of biological role, this protein binds to the 23S rRNA, and is important in its secondary structure. It is located near the subunit interface in the base of the L7/L12 stalk, and near the tRNA binding site of the peptidyltransferase center. The sequence is that of Large ribosomal subunit protein uL6 from Lactococcus lactis subsp. cremoris (strain SK11).